The chain runs to 225 residues: Fibronectin type III domain-containing protein (225 aa).

Residues 1-17 form the signal peptide; the sequence is MFSFGIILLTVVSFTNA. The 101-residue stretch at 106 to 206 folds into the Fibronectin type-III domain; the sequence is PPTNVIVEST…MPLNVKTPDI (101 aa).

In terms of tissue distribution, component of the organic matrix of calcified shell layers like nacre and prisms.

The protein resides in the secreted. The sequence is that of Fibronectin type III domain-containing protein from Mytilus californianus (California mussel).